The following is a 209-amino-acid chain: Large ribosomal subunit protein uL3 (209 aa).

The disordered stretch occupies residues 118–151 (GFQGAIKRHGQSRGPMSHGSRYHRRPGSMGPVAP).

The protein belongs to the universal ribosomal protein uL3 family. As to quaternary structure, part of the 50S ribosomal subunit. Forms a cluster with proteins L14 and L19.

Its function is as follows. One of the primary rRNA binding proteins, it binds directly near the 3'-end of the 23S rRNA, where it nucleates assembly of the 50S subunit. The sequence is that of Large ribosomal subunit protein uL3 from Enterococcus faecalis (strain ATCC 700802 / V583).